The chain runs to 251 residues: uncharacterized protein (251 aa).

The signal sequence occupies residues 1–19 (MRYLKRITIYISLLILVSG). Residue Cys20 is the site of N-palmitoyl cysteine attachment. The S-diacylglycerol cysteine moiety is linked to residue Cys20.

The protein belongs to the staphylococcal tandem lipoprotein family.

It is found in the cell membrane. This is an uncharacterized protein from Staphylococcus epidermidis (strain ATCC 12228 / FDA PCI 1200).